The chain runs to 177 residues: Large ribosomal subunit protein uL6 (177 aa).

Residues 151–177 are disordered; sequence KRPPEPYKGKGVKYADEHIRRKEGKKS. Over residues 152–177 the composition is skewed to basic and acidic residues; the sequence is RPPEPYKGKGVKYADEHIRRKEGKKS.

It belongs to the universal ribosomal protein uL6 family. Part of the 50S ribosomal subunit.

This protein binds to the 23S rRNA, and is important in its secondary structure. It is located near the subunit interface in the base of the L7/L12 stalk, and near the tRNA binding site of the peptidyltransferase center. The polypeptide is Large ribosomal subunit protein uL6 (Fusobacterium nucleatum subsp. nucleatum (strain ATCC 25586 / DSM 15643 / BCRC 10681 / CIP 101130 / JCM 8532 / KCTC 2640 / LMG 13131 / VPI 4355)).